A 66-amino-acid polypeptide reads, in one-letter code: Large ribosomal subunit protein bL31 (66 aa).

The Zn(2+) site is built by Cys-16, Cys-18, Cys-36, and Cys-39.

It belongs to the bacterial ribosomal protein bL31 family. Type A subfamily. In terms of assembly, part of the 50S ribosomal subunit. Zn(2+) is required as a cofactor.

In terms of biological role, binds the 23S rRNA. The protein is Large ribosomal subunit protein bL31 of Campylobacter curvus (strain 525.92).